The chain runs to 443 residues: Xaa-Pro dipeptidase (443 aa).

Mn(2+) is bound by residues Asp246, Asp257, His339, Glu384, and Glu423.

It belongs to the peptidase M24B family. Bacterial-type prolidase subfamily. Requires Mn(2+) as cofactor.

It carries out the reaction Xaa-L-Pro dipeptide + H2O = an L-alpha-amino acid + L-proline. Its function is as follows. Splits dipeptides with a prolyl residue in the C-terminal position. The sequence is that of Xaa-Pro dipeptidase from Escherichia coli (strain 55989 / EAEC).